The chain runs to 486 residues: Probable transporter MCH1 (486 aa).

Topologically, residues 1 to 29 (MPLSKVEHYLSYHTRLLLPHVLSLQSSHR) are cytoplasmic. The chain crosses the membrane as a helical span at residues 30 to 50 (VAYIFSLLSAVSTGFITLISL). Topologically, residues 51–67 (YSQPWQKHLNYSSWQIN) are vacuolar. Asn-60 is a glycosylation site (N-linked (GlcNAc...) asparagine). Residues 68–88 (TIASMTNLGMYLTPPILGMIA) traverse the membrane as a helical segment. Topologically, residues 89–93 (DSHGP) are cytoplasmic. The helical transmembrane segment at 94–114 (ITLSLLAIIGFIPSYSYLAYV) threads the bilayer. Residues 115 to 133 (FNHPELSLGGNGDSSFNLS) are Vacuolar-facing. The N-linked (GlcNAc...) asparagine glycan is linked to Asn-131. The helical transmembrane segment at 134–154 (IICFVFIGISTSALYFSALLT) threads the bilayer. The Cytoplasmic portion of the chain corresponds to 155-163 (CTKLYPHTK). A helical membrane pass occupies residues 164 to 184 (LLSISLPTTCYGISSVVGSQL). Residues 185 to 212 (LRIKWFWSSNASSSSSNSDLNLGRVFQT) are Vacuolar-facing. Asn-194 is a glycosylation site (N-linked (GlcNAc...) asparagine). Residues 213 to 233 (FALVYVVIGLLAWIATSVVSL) traverse the membrane as a helical segment. Topologically, residues 234–279 (LHFNEEQDNQKRLDDQTDVEQSPLLERSNHVQEKFTQTMLRIFSDP) are cytoplasmic. Position 255 is a phosphoserine (Ser-255). Residues 280–300 (VTYILAVSILLSLGPLEMFIA) form a helical membrane-spanning segment. Residues 301–320 (NMGSLTNLLVQLDAPTLSTK) lie on the Vacuolar side of the membrane. Residues 321–343 (LLSTYALSSTFTRLLTGIVADFF) traverse the membrane as a helical segment. Topologically, residues 344–347 (AKKK) are cytoplasmic. A helical membrane pass occupies residues 348 to 368 (ISIKWILLTFLSLGVCAQLFL). Over 369–385 (LKMTSSASPWGLVPTGS) the chain is Vacuolar. A helical membrane pass occupies residues 386–406 (LVGIVYGGLFTVYPTLVLLVW). Over 407–413 (GERSFGT) the chain is Cytoplasmic. A helical transmembrane segment spans residues 414–434 (VYGSLLIAPAIGSMIFCMLYA). The Vacuolar segment spans residues 435 to 456 (KFYDSRCMSGGGDLRNPSCISA). A helical transmembrane segment spans residues 457–477 (VYKYSSIAFVVSAVLSAVVFW). Residues 478–486 (KLKSRKLRI) are Cytoplasmic-facing.

It belongs to the major facilitator superfamily.

It is found in the vacuole membrane. Functionally, probable transporter. Does not act in the transport of monocarboxylic acids across the plasma membrane. This chain is Probable transporter MCH1 (MCH1), found in Saccharomyces cerevisiae (strain ATCC 204508 / S288c) (Baker's yeast).